Here is a 319-residue protein sequence, read N- to C-terminus: NADH-quinone oxidoreductase subunit H 1 (319 aa).

Helical transmembrane passes span 1–21, 77–97, 107–127, 147–167, 179–199, 214–234, 238–258, 262–282, and 293–313; these read MIGL…LLVV, ILAP…VAFG, VGVL…MLGA, LAYE…AGSL, VWFV…GVAA, LVAG…FLGE, VLLV…GPWL, IWFG…RATL, and FAWK…GIVV.

This sequence belongs to the complex I subunit 1 family. As to quaternary structure, NDH-1 is composed of 14 different subunits. Subunits NuoA, H, J, K, L, M, N constitute the membrane sector of the complex.

The protein localises to the cell inner membrane. The enzyme catalyses a quinone + NADH + 5 H(+)(in) = a quinol + NAD(+) + 4 H(+)(out). Its function is as follows. NDH-1 shuttles electrons from NADH, via FMN and iron-sulfur (Fe-S) centers, to quinones in the respiratory chain. The immediate electron acceptor for the enzyme in this species is believed to be ubiquinone. Couples the redox reaction to proton translocation (for every two electrons transferred, four hydrogen ions are translocated across the cytoplasmic membrane), and thus conserves the redox energy in a proton gradient. This subunit may bind ubiquinone. The sequence is that of NADH-quinone oxidoreductase subunit H 1 from Rhodopseudomonas palustris (strain HaA2).